The sequence spans 160 residues: Serine-protein kinase RsbW (160 aa).

The protein belongs to the anti-sigma-factor family.

It carries out the reaction L-seryl-[protein] + ATP = O-phospho-L-seryl-[protein] + ADP + H(+). The enzyme catalyses L-threonyl-[protein] + ATP = O-phospho-L-threonyl-[protein] + ADP + H(+). Negative regulator of sigma-B activity. Phosphorylates and inactivates its specific antagonist protein, RsbV. Upon phosphorylation of RsbV, RsbW is released and binds to sigma-B, thereby blocking its ability to form an RNA polymerase holoenzyme (E-sigma-B). In Bacillus cereus (strain B4264), this protein is Serine-protein kinase RsbW.